Reading from the N-terminus, the 507-residue chain is Glycerol kinase (507 aa).

Thr15 lines the ADP pocket. 3 residues coordinate ATP: Thr15, Thr16, and Ser17. Position 15 (Thr15) interacts with sn-glycerol 3-phosphate. Residue Arg19 participates in ADP binding. Sn-glycerol 3-phosphate-binding residues include Arg85, Glu86, Tyr137, and Asp250. Residues Arg85, Glu86, Tyr137, Asp250, and Gln251 each contribute to the glycerol site. ADP is bound by residues Thr272, Gly316, and Gly418. The ATP site is built by Thr272, Gly316, and Gly418.

This sequence belongs to the FGGY kinase family.

It catalyses the reaction glycerol + ATP = sn-glycerol 3-phosphate + ADP + H(+). The protein operates within polyol metabolism; glycerol degradation via glycerol kinase pathway; sn-glycerol 3-phosphate from glycerol: step 1/1. Inhibited by fructose 1,6-bisphosphate (FBP). In terms of biological role, key enzyme in the regulation of glycerol uptake and metabolism. Catalyzes the phosphorylation of glycerol to yield sn-glycerol 3-phosphate. This Malacoplasma penetrans (strain HF-2) (Mycoplasma penetrans) protein is Glycerol kinase.